Here is a 330-residue protein sequence, read N- to C-terminus: Glycerol-3-phosphate dehydrogenase [NAD(P)+] (330 aa).

Residues Ser-10, Trp-11, Arg-31, and Lys-105 each contribute to the NADPH site. Sn-glycerol 3-phosphate-binding residues include Lys-105, Gly-135, and Ser-137. An NADPH-binding site is contributed by Ala-139. Positions 190, 243, 253, 254, and 255 each coordinate sn-glycerol 3-phosphate. Lys-190 (proton acceptor) is an active-site residue. An NADPH-binding site is contributed by Arg-254. Positions 278 and 280 each coordinate NADPH.

The protein belongs to the NAD-dependent glycerol-3-phosphate dehydrogenase family.

It is found in the cytoplasm. It catalyses the reaction sn-glycerol 3-phosphate + NAD(+) = dihydroxyacetone phosphate + NADH + H(+). The enzyme catalyses sn-glycerol 3-phosphate + NADP(+) = dihydroxyacetone phosphate + NADPH + H(+). Its pathway is membrane lipid metabolism; glycerophospholipid metabolism. In terms of biological role, catalyzes the reduction of the glycolytic intermediate dihydroxyacetone phosphate (DHAP) to sn-glycerol 3-phosphate (G3P), the key precursor for phospholipid synthesis. The sequence is that of Glycerol-3-phosphate dehydrogenase [NAD(P)+] from Nitratidesulfovibrio vulgaris (strain DP4) (Desulfovibrio vulgaris).